The primary structure comprises 376 residues: Serpin B6 (376 aa).

Met-1 is subject to N-acetylmethionine. Phosphoserine is present on Ser-151. Position 195 is an N6-acetyllysine (Lys-195).

This sequence belongs to the serpin family. Ov-serpin subfamily. As to quaternary structure, forms a complex with the monomeric form of beta-tryptase.

Its subcellular location is the cytoplasm. Its function is as follows. Inhibitor of cathepsin G, kallikrein-8 and thrombin. May play an important role in the inner ear in the protection against leakage of lysosomal content during stress. May be involved in the regulation of serine proteinases present in the brain or extravasated from the blood. This Pongo abelii (Sumatran orangutan) protein is Serpin B6 (SERPINB6).